The sequence spans 423 residues: Histidine--tRNA ligase (423 aa).

This sequence belongs to the class-II aminoacyl-tRNA synthetase family. As to quaternary structure, homodimer.

The protein resides in the cytoplasm. The enzyme catalyses tRNA(His) + L-histidine + ATP = L-histidyl-tRNA(His) + AMP + diphosphate + H(+). The chain is Histidine--tRNA ligase from Orientia tsutsugamushi (strain Ikeda) (Rickettsia tsutsugamushi).